The primary structure comprises 318 residues: Acetaldehyde dehydrogenase 1 (318 aa).

15 to 18 (SGNI) lines the NAD(+) pocket. Cysteine 133 acts as the Acyl-thioester intermediate in catalysis. NAD(+) is bound by residues 164–172 (SAGPGTRAN) and asparagine 289.

It belongs to the acetaldehyde dehydrogenase family.

It catalyses the reaction acetaldehyde + NAD(+) + CoA = acetyl-CoA + NADH + H(+). The protein is Acetaldehyde dehydrogenase 1 (xylQ) of Azotobacter vinelandii (strain DJ / ATCC BAA-1303).